A 534-amino-acid chain; its full sequence is Protein tweety homolog 2 (534 aa).

The Extracellular segment spans residues 1 to 44 (MATARVEYIAPWWVYWLHNLPHVDFSLQRESGDFNPKDPGYQQT). The chain crosses the membrane as a helical span at residues 45–65 (LLFVALFIALCAAVNLLFVSG). Residues 66–87 (YLICLCCCKKEDETETKMTSSC) are Cytoplasmic-facing. The chain crosses the membrane as a helical span at residues 88–108 (CVTWTAAVSGLLCCAAVGIGF). Topologically, residues 109–213 (YGNSETNDGV…NASIIEYYRW (105 aa)) are extracellular. Positions 113 and 116 each coordinate Ca(2+). Asparagine 129 carries an N-linked (GlcNAc...) asparagine glycan. The RGD motif lies at 164 to 166 (RGD). 2 N-linked (GlcNAc...) asparagine glycosylation sites follow: asparagine 197 and asparagine 204. The chain crosses the membrane as a helical span at residues 214 to 234 (LSYLILFITDVVICLVTCLGL). Residues 235-240 (AKKSKC) lie on the Cytoplasmic side of the membrane. The helical transmembrane segment at 241–261 (LLLTMLCCGLIALMLSWASLA) threads the bilayer. The Extracellular portion of the chain corresponds to 262–388 (LETSSAVGTS…IGICYDGVEG (127 aa)). 2 disulfide bridges follow: cysteine 274–cysteine 382 and cysteine 300–cysteine 367. Asparagine 352 carries N-linked (GlcNAc...) asparagine glycosylation. Residues 389–409 (LLYLSLFSLLAAVAFTAMVCA) form a helical membrane-spanning segment. The Cytoplasmic portion of the chain corresponds to 410-534 (MPRAWKHLAA…PNIYSNVFPA (125 aa)).

This sequence belongs to the tweety family. In terms of assembly, forms cis-homodimers in the presence of Ca(+2) and forms monomers and trans-dimers in the absence of Ca(2+).

The protein localises to the cell membrane. It catalyses the reaction chloride(in) = chloride(out). The enzyme catalyses L-glutamate(out) = L-glutamate(in). May act as a calcium-independent, swelling-dependent volume-regulated anion channel (VRAC-swell) which plays a pivotal role in the process of regulatory volume decrease (RVD) in the brain through the efflux of anions like chloride and organic osmolytes like glutamate. Probable large-conductance Ca(2+)-activated chloride channel. The sequence is that of Protein tweety homolog 2 (ttyh2) from Xenopus laevis (African clawed frog).